The primary structure comprises 362 residues: Spermidine/putrescine import ATP-binding protein PotA (362 aa).

Residues 6–236 form the ABC transporter domain; the sequence is VELKHVGKRY…PVNHFVADFI (231 aa). 38 to 45 is an ATP binding site; that stretch reads GPSGSGKT.

The protein belongs to the ABC transporter superfamily. Spermidine/putrescine importer (TC 3.A.1.11.1) family. The complex is composed of two ATP-binding proteins (PotA), two transmembrane proteins (PotB and PotC) and a solute-binding protein (PotD).

The protein localises to the cell membrane. The enzyme catalyses ATP + H2O + polyamine-[polyamine-binding protein]Side 1 = ADP + phosphate + polyamineSide 2 + [polyamine-binding protein]Side 1.. Functionally, part of the ABC transporter complex PotABCD involved in spermidine/putrescine import. Responsible for energy coupling to the transport system. The polypeptide is Spermidine/putrescine import ATP-binding protein PotA (Lacticaseibacillus paracasei (strain ATCC 334 / BCRC 17002 / CCUG 31169 / CIP 107868 / KCTC 3260 / NRRL B-441) (Lactobacillus paracasei)).